Reading from the N-terminus, the 259-residue chain is Imidazole glycerol phosphate synthase subunit HisF (259 aa).

Residues D11 and D130 contribute to the active site.

This sequence belongs to the HisA/HisF family. In terms of assembly, heterodimer of HisH and HisF.

It localises to the cytoplasm. The enzyme catalyses 5-[(5-phospho-1-deoxy-D-ribulos-1-ylimino)methylamino]-1-(5-phospho-beta-D-ribosyl)imidazole-4-carboxamide + L-glutamine = D-erythro-1-(imidazol-4-yl)glycerol 3-phosphate + 5-amino-1-(5-phospho-beta-D-ribosyl)imidazole-4-carboxamide + L-glutamate + H(+). Its pathway is amino-acid biosynthesis; L-histidine biosynthesis; L-histidine from 5-phospho-alpha-D-ribose 1-diphosphate: step 5/9. IGPS catalyzes the conversion of PRFAR and glutamine to IGP, AICAR and glutamate. The HisF subunit catalyzes the cyclization activity that produces IGP and AICAR from PRFAR using the ammonia provided by the HisH subunit. The polypeptide is Imidazole glycerol phosphate synthase subunit HisF (Desulfovibrio desulfuricans (strain ATCC 27774 / DSM 6949 / MB)).